The chain runs to 96 residues: Defensin-like protein 69 (96 aa).

Positions 1 to 19 (MGSSKLLVAFTLIVMMTIS) are cleaved as a signal peptide. 4 disulfides stabilise this stretch: C37–C86, C41–C64, C50–C84, and C54–C85.

This sequence belongs to the DEFL family.

It is found in the secreted. In Arabidopsis thaliana (Mouse-ear cress), this protein is Defensin-like protein 69.